The chain runs to 686 residues: Delta-like protein 4 (686 aa).

The first 27 residues, 1–27 (MTPGSRSACRWALLLLAVLWPQQRAAG), serve as a signal peptide directing secretion. Over 28 to 530 (SGIFQLRLQE…PVGLPPSFPW (503 aa)) the chain is Extracellular. 2 cysteine pairs are disulfide-bonded: Cys51–Cys55 and Cys62–Cys75. Residues Asn79, Asn109, and Asn162 are each glycosylated (N-linked (GlcNAc...) asparagine). Residues 174 to 218 (VVCSDNYYGDSCSRLCKKRDDHFGHYECQPDGSLSCLPGWTGKYC) form the DSL domain. A disulfide bond links Cys176 and Cys185. Interaction with Notch1 regions lie at residues 186 to 188 (SRL) and 192 to 196 (RDDHF). 26 disulfide bridges follow: Cys189-Cys201, Cys209-Cys218, Cys223-Cys234, Cys227-Cys240, Cys242-Cys251, Cys254-Cys265, Cys260-Cys271, Cys273-Cys282, Cys289-Cys301, Cys295-Cys311, Cys313-Cys322, Cys329-Cys340, Cys334-Cys349, Cys351-Cys360, Cys367-Cys378, Cys372-Cys389, Cys391-Cys400, Cys407-Cys418, Cys412-Cys427, Cys429-Cys438, Cys445-Cys456, Cys450-Cys465, Cys467-Cys476, Cys485-Cys496, Cys490-Cys507, and Cys509-Cys518. EGF-like domains follow at residues 219-252 (DQPI…PLCN), 256-283 (PHNG…LFCD), 285-323 (DLNY…EHCE), 325-361 (ELSK…QHCE), 363-401 (STLT…SNCE), 403-439 (KVDR…THCE), 441-477 (HISD…RRCE), and 481-519 (TNDA…SRCE). A helical transmembrane segment spans residues 531–551 (VAVSLGVGLVVLLVLLVMVAV). Residues 552–686 (AVRQLRLRRP…RNECVIATEV (135 aa)) lie on the Cytoplasmic side of the membrane.

As to quaternary structure, interacts with NOTCH4. Interacts (via N-terminal DSL and MNNL domains) with NOTCH1 (via EGF-like domains).

Its subcellular location is the cell membrane. Involved in the Notch signaling pathway as Notch ligand. Activates NOTCH1 and NOTCH4. Involved in angiogenesis; negatively regulates endothelial cell proliferation and migration and angiogenic sprouting. Essential for retinal progenitor proliferation. Required for suppressing rod fates in late retinal progenitors as well as for proper generation of other retinal cell types. During spinal cord neurogenesis, inhibits V2a interneuron fate. The protein is Delta-like protein 4 of Rattus norvegicus (Rat).